A 632-amino-acid polypeptide reads, in one-letter code: Phosphoglucomutase, chloroplastic (632 aa).

Residues 1–72 constitute a chloroplast transit peptide; it reads MAMESALTST…PSSPSTSVAQ (72 aa). Arginine 97 and serine 190 together coordinate alpha-D-glucose 1,6-bisphosphate. Serine 190 acts as the Phosphoserine intermediate in catalysis. The Mg(2+) site is built by serine 190, aspartate 355, aspartate 357, and aspartate 359. Serine 190 carries the phosphoserine modification. Alpha-D-glucose 1,6-bisphosphate contacts are provided by aspartate 359, arginine 360, threonine 423, glutamate 442, serine 444, and lysine 455.

It belongs to the phosphohexose mutase family. As to quaternary structure, monomer. Mg(2+) serves as cofactor.

Its subcellular location is the plastid. It is found in the chloroplast. The enzyme catalyses alpha-D-glucose 1-phosphate = alpha-D-glucose 6-phosphate. It carries out the reaction O-phospho-L-seryl-[protein] + alpha-D-glucose 1-phosphate = alpha-D-glucose 1,6-bisphosphate + L-seryl-[protein]. The catalysed reaction is alpha-D-glucose 1,6-bisphosphate + L-seryl-[protein] = O-phospho-L-seryl-[protein] + alpha-D-glucose 6-phosphate. Inhibited by the Calvin cycle intermediates fructose-1,6-bisphosphate and ribulose-1,5-bisphosphate. Its function is as follows. Catalyzes the reversible isomerization of alpha-D-glucose 1-phosphate to alpha-D-glucose 6-phosphate. The mechanism proceeds via the intermediate compound alpha-D-glucose 1,6-bisphosphate. This enzyme participates in both the breakdown and synthesis of glucose. Promotes gravitropic responses, negative in shoots but positive in roots, by facilitating starch granules (statoliths) formation. This is Phosphoglucomutase, chloroplastic (PGMP) from Solanum tuberosum (Potato).